Consider the following 376-residue polypeptide: Putative MSV199 domain-containing protein 468L (376 aa).

Residues 178–261 are a coiled coil; that stretch reads QKREKETMSR…VNTVQKKLDI (84 aa).

This Invertebrate iridescent virus 6 (IIV-6) protein is Putative MSV199 domain-containing protein 468L.